The chain runs to 158 residues: Ribonuclease H (158 aa).

One can recognise an RNase H type-1 domain in the interval 3–144 (GLKQLLIFTD…CDTLAREAAE (142 aa)). Mg(2+) is bound by residues Asp12, Glu50, Asp72, and Asp136.

The protein belongs to the RNase H family. In terms of assembly, monomer. Mg(2+) serves as cofactor.

It localises to the cytoplasm. It catalyses the reaction Endonucleolytic cleavage to 5'-phosphomonoester.. In terms of biological role, endonuclease that specifically degrades the RNA of RNA-DNA hybrids. The chain is Ribonuclease H from Shewanella loihica (strain ATCC BAA-1088 / PV-4).